A 363-amino-acid polypeptide reads, in one-letter code: Chorismate synthase (363 aa).

Arg-48 is an NADP(+) binding site. FMN contacts are provided by residues 125–127 (RSS), 238–239 (NA), Gly-278, 293–297 (KPTAS), and Arg-319.

It belongs to the chorismate synthase family. In terms of assembly, homotetramer. It depends on FMNH2 as a cofactor.

The enzyme catalyses 5-O-(1-carboxyvinyl)-3-phosphoshikimate = chorismate + phosphate. Its pathway is metabolic intermediate biosynthesis; chorismate biosynthesis; chorismate from D-erythrose 4-phosphate and phosphoenolpyruvate: step 7/7. Catalyzes the anti-1,4-elimination of the C-3 phosphate and the C-6 proR hydrogen from 5-enolpyruvylshikimate-3-phosphate (EPSP) to yield chorismate, which is the branch point compound that serves as the starting substrate for the three terminal pathways of aromatic amino acid biosynthesis. This reaction introduces a second double bond into the aromatic ring system. This chain is Chorismate synthase, found in Acinetobacter baumannii (strain SDF).